Reading from the N-terminus, the 426-residue chain is Dihydroorotase (426 aa).

The Zn(2+) site is built by His58 and His60. Substrate contacts are provided by residues 60 to 62 (HLR) and Asn92. 3 residues coordinate Zn(2+): Asp150, His177, and His230. Substrate is bound at residue Asn276. Asp303 contributes to the Zn(2+) binding site. Residue Asp303 is part of the active site. Residues His307 and 321 to 322 (FG) each bind substrate.

Belongs to the metallo-dependent hydrolases superfamily. DHOase family. Class I DHOase subfamily. Zn(2+) is required as a cofactor.

It carries out the reaction (S)-dihydroorotate + H2O = N-carbamoyl-L-aspartate + H(+). It functions in the pathway pyrimidine metabolism; UMP biosynthesis via de novo pathway; (S)-dihydroorotate from bicarbonate: step 3/3. Its function is as follows. Catalyzes the reversible cyclization of carbamoyl aspartate to dihydroorotate. In Listeria monocytogenes serotype 4b (strain F2365), this protein is Dihydroorotase.